We begin with the raw amino-acid sequence, 356 residues long: Poly(rC)-binding protein 1 (356 aa).

At M1 the chain carries N-acetylmethionine. 2 KH domains span residues 13 to 75 and 97 to 162; these read TLTI…FAMI and PVTL…VKQI. K115 participates in a covalent cross-link: Glycyl lysine isopeptide (Lys-Gly) (interchain with G-Cter in SUMO2). Phosphoserine is present on residues S173, S189, S190, S246, S264, and S273. The KH 3 domain maps to 279–343; it reads QTTHELTIPN…ASISLAQYLI (65 aa).

Post-translationally, phosphorylated; lowers poly(rC)-binding activity.

The protein localises to the nucleus. The protein resides in the cytoplasm. In terms of biological role, single-stranded nucleic acid binding protein that binds preferentially to oligo dC. Together with PCBP2, required for erythropoiesis, possibly by regulating mRNA splicing. The sequence is that of Poly(rC)-binding protein 1 (PCBP1) from Bos taurus (Bovine).